Consider the following 549-residue polypeptide: Chaperonin GroEL (549 aa).

ATP-binding positions include 30–33 (TLGP), Lys51, 87–91 (DGTTT), Gly415, and Asp495.

Belongs to the chaperonin (HSP60) family. In terms of assembly, forms a cylinder of 14 subunits composed of two heptameric rings stacked back-to-back. Interacts with the co-chaperonin GroES.

The protein localises to the cytoplasm. It carries out the reaction ATP + H2O + a folded polypeptide = ADP + phosphate + an unfolded polypeptide.. Together with its co-chaperonin GroES, plays an essential role in assisting protein folding. The GroEL-GroES system forms a nano-cage that allows encapsulation of the non-native substrate proteins and provides a physical environment optimized to promote and accelerate protein folding. The chain is Chaperonin GroEL from Colwellia maris.